The following is a 351-amino-acid chain: Phosphoribosylformylglycinamidine cyclo-ligase (351 aa).

It belongs to the AIR synthase family.

It localises to the cytoplasm. The enzyme catalyses 2-formamido-N(1)-(5-O-phospho-beta-D-ribosyl)acetamidine + ATP = 5-amino-1-(5-phospho-beta-D-ribosyl)imidazole + ADP + phosphate + H(+). Its pathway is purine metabolism; IMP biosynthesis via de novo pathway; 5-amino-1-(5-phospho-D-ribosyl)imidazole from N(2)-formyl-N(1)-(5-phospho-D-ribosyl)glycinamide: step 2/2. This is Phosphoribosylformylglycinamidine cyclo-ligase from Burkholderia pseudomallei (strain 668).